The sequence spans 453 residues: O-glucose prenyltransferase PaPT (453 aa).

Residue 95 to 96 coordinates L-tryptophan; sequence AP. Substrate is bound by residues K210, Y212, R279, K281, Y283, Y368, and Y435.

Belongs to the tryptophan dimethylallyltransferase family.

It functions in the pathway mycotoxin biosynthesis. O-glucose prenyltransferase; part of the 2 gene clusters that mediate the biosynthesis of fusicoccins, diterpene glucosides that display phytohormone-like activity and function as potent activators of plasma membrane H(+)-ATPases in plants by modifying 14-3-3 proteins and cause the plant disease constriction canker. The first step in the pathway is performed by the fusicoccadiene synthase PaFS that possesses both prenyl transferase and terpene cyclase activity, converting isopentenyl diphosphate and dimethylallyl diphosphate into geranylgeranyl diphosphate (GGDP) and successively converting GGDP into fusicocca-2,10(14)-diene, a precursor for fusicoccin H. The second step is the oxidation at the C-8 position by the cytochrome P450 monooxygenase PaP450-2 to yield fusicocca-2,10(14)-diene-8-beta-ol. The cytochrome P450 monooxygenase PaP450-1 then catalyzes the hydroxylation at the C-16 position to produce fusicocca-2,10(14)-diene-8-beta,16-diol. The dioxygenase fc-dox then catalyzes the 16-oxydation of fusicocca-2,10(14)-diene-8-beta,16-diol to yield an aldehyde (8-beta-hydroxyfusicocca-1,10(14)-dien-16-al). The short-chain dehydrogenase/reductase fc-sdr catalyzes the reduction of the aldehyde to yield fusicocca-1,10(14)-diene-8-beta,16-diol. The next step is the hydroxylation at C-9 performed by the cytochrome P450 monooxygenase PaP450-3 that leads to fusicoccin H aglycon which is glycosylated to fusicoccin H by the O-glycosyltransferase PaGT. Hydroxylation at C-12 by the cytochrome P450 monooxygenase PaP450-4 leads then to the production of fusicoccin Q and is followed by methylation by the O-methyltransferase PaMT to yield fusicoccin P. Fusicoccin P is further converted to fusicoccin J via prenylation by the O-glucose prenyltransferase PaPT. Cytochrome P450 monooxygenase PaP450-5 then performs hydroxylation at C-19 to yield dideacetyl-fusicoccin A which is acetylated to 3'-O-deacetyl-fusicoccin A by the O-acetyltransferase PaAT-2. Finally, a another acetylation by the O-acetyltransferase PaAT-1 yields fusicoccin A. This is O-glucose prenyltransferase PaPT from Phomopsis amygdali (Fusicoccum amygdali).